A 459-amino-acid polypeptide reads, in one-letter code: Ribosomal protein uS12 methylthiotransferase RimO (459 aa).

A disordered region spans residues 1 to 28; it reads MSTNPPDLRPDLAPKARLTQPDRPGQPT. Residues 27 to 137 enclose the MTTase N-terminal domain; it reads PTIGMVSLGC…VLDAVHAAVP (111 aa). Positions 36, 72, 101, 168, 172, and 175 each coordinate [4Fe-4S] cluster. Residues 154–387 form the Radical SAM core domain; sequence LTPRHFSYLK…MAKSQDISEA (234 aa). A TRAM domain is found at 390–457; the sequence is AAKVAQRLEV…EYDLWGRLAP (68 aa).

Belongs to the methylthiotransferase family. RimO subfamily. [4Fe-4S] cluster serves as cofactor.

It localises to the cytoplasm. It carries out the reaction L-aspartate(89)-[ribosomal protein uS12]-hydrogen + (sulfur carrier)-SH + AH2 + 2 S-adenosyl-L-methionine = 3-methylsulfanyl-L-aspartate(89)-[ribosomal protein uS12]-hydrogen + (sulfur carrier)-H + 5'-deoxyadenosine + L-methionine + A + S-adenosyl-L-homocysteine + 2 H(+). Functionally, catalyzes the methylthiolation of an aspartic acid residue of ribosomal protein uS12. The chain is Ribosomal protein uS12 methylthiotransferase RimO from Roseobacter denitrificans (strain ATCC 33942 / OCh 114) (Erythrobacter sp. (strain OCh 114)).